Reading from the N-terminus, the 468-residue chain is Uronate isomerase (468 aa).

This sequence belongs to the metallo-dependent hydrolases superfamily. Uronate isomerase family.

The enzyme catalyses D-glucuronate = D-fructuronate. It catalyses the reaction aldehydo-D-galacturonate = keto-D-tagaturonate. Its pathway is carbohydrate metabolism; pentose and glucuronate interconversion. The protein is Uronate isomerase of Lachnospira eligens (strain ATCC 27750 / DSM 3376 / VPI C15-48 / C15-B4) (Eubacterium eligens).